Reading from the N-terminus, the 182-residue chain is Isopentenyl-diphosphate Delta-isomerase (182 aa).

Mn(2+) is bound by residues histidine 25 and histidine 32. The Nudix hydrolase domain occupies leucine 30–methionine 164. Cysteine 67 is an active-site residue. Cysteine 67 is a Mg(2+) binding site. Histidine 69 lines the Mn(2+) pocket. Glutamate 87 is a Mg(2+) binding site. Residues glutamate 114 and glutamate 116 each contribute to the Mn(2+) site. Residue glutamate 116 is part of the active site.

This sequence belongs to the IPP isomerase type 1 family. As to quaternary structure, homodimer. Mg(2+) serves as cofactor. It depends on Mn(2+) as a cofactor.

Its subcellular location is the cytoplasm. It catalyses the reaction isopentenyl diphosphate = dimethylallyl diphosphate. The protein operates within isoprenoid biosynthesis; dimethylallyl diphosphate biosynthesis; dimethylallyl diphosphate from isopentenyl diphosphate: step 1/1. In terms of biological role, catalyzes the 1,3-allylic rearrangement of the homoallylic substrate isopentenyl (IPP) to its highly electrophilic allylic isomer, dimethylallyl diphosphate (DMAPP). The polypeptide is Isopentenyl-diphosphate Delta-isomerase (Shigella boydii serotype 4 (strain Sb227)).